Reading from the N-terminus, the 141-residue chain is Nucleoside diphosphate kinase (141 aa).

6 residues coordinate ATP: Lys11, Phe59, Arg87, Thr93, Arg104, and Asn114. His117 functions as the Pros-phosphohistidine intermediate in the catalytic mechanism.

Belongs to the NDK family. Homotetramer. Mg(2+) serves as cofactor.

The protein resides in the cytoplasm. It carries out the reaction a 2'-deoxyribonucleoside 5'-diphosphate + ATP = a 2'-deoxyribonucleoside 5'-triphosphate + ADP. The enzyme catalyses a ribonucleoside 5'-diphosphate + ATP = a ribonucleoside 5'-triphosphate + ADP. Its function is as follows. Major role in the synthesis of nucleoside triphosphates other than ATP. The ATP gamma phosphate is transferred to the NDP beta phosphate via a ping-pong mechanism, using a phosphorylated active-site intermediate. The polypeptide is Nucleoside diphosphate kinase (Mannheimia succiniciproducens (strain KCTC 0769BP / MBEL55E)).